We begin with the raw amino-acid sequence, 225 residues long: Lectin (225 aa).

Homotetramer.

Its function is as follows. Chitin-binding lectin. Agglutinates rabbit erythrocytes, but not human erythrocytes. The chain is Lectin from Vachellia farnesiana (Sweet acacia).